The chain runs to 1127 residues: Ras guanine nucleotide exchange factor F (1127 aa).

Disordered regions lie at residues 1–82 (MTDK…SLLN) and 96–154 (NSGG…SSSS). 2 stretches are compositionally biased toward low complexity: residues 23–53 (NQPS…TTSP) and 67–82 (NNNN…SLLN). A compositionally biased stretch (polar residues) spans 122–132 (RTSTTLAQFSG). A compositionally biased stretch (low complexity) spans 133-154 (SSLPNTENSSPPPSSSLISSSS). Kelch repeat units follow at residues 212 to 261 (GFYL…LYNN), 262 to 311 (SMYI…VESG), 313 to 366 (MIVF…MHKG), 367 to 418 (NMYV…LFQD), and 420 to 469 (IFIS…VKGN). One can recognise a LisH domain in the interval 557 to 589 (SHQFVLQLIMEYLERNTYHKVIAAIQKESGVLH). Positions 673 to 804 (NKVQIKAATF…KLRELKKKLQ (132 aa)) constitute an N-terminal Ras-GEF domain. In terms of domain architecture, Ras-GEF spans 835–1062 (DELEIARQMT…YDLNLLSESL (228 aa)). A disordered region spans residues 1090 to 1127 (LGSARELNNSNRDSNNITGSSSNNNSNSSNSLSPIVKL). Positions 1103 to 1127 (SNNITGSSSNNNSNSSNSLSPIVKL) are enriched in low complexity.

In terms of biological role, promotes the exchange of Ras-bound GDP by GTP. The polypeptide is Ras guanine nucleotide exchange factor F (gefF) (Dictyostelium discoideum (Social amoeba)).